Reading from the N-terminus, the 161-residue chain is Prs ADP-ribosylating toxin (161 aa).

Belongs to the MbcT/ParT/Res family. Homodimer, forms heterotetrameric ParS(2)-ParT(2) complexes. Consumes NAD(+) and auto-ADP-ribosylates on the tryptic fragment Ala-47-Arg-66 in vitro. Also auto-ADP-ribosylates using NADP(+).

Its function is as follows. Toxic component of a type II toxin-antitoxin (TA) system. Expression in E.coli inhibits cell growth; bacteriostasis is neutralized by expression of cognate antitoxin ParS. ADP-ribosylates E.coli ribose-phosphate pyrophosphokinase (RPPK, prs) using NAD(+) in vitro; ADP-ribosylates RPPK on 'Lys-182' and 'Ser-202'. Cannot use NADP(+). Also auto-ADP-ribosylates in vitro; in the presence of RPPK auto-ADP-ribosylation decreases. This is Prs ADP-ribosylating toxin from Sphingobium sp. (strain YBL2).